A 1476-amino-acid polypeptide reads, in one-letter code: Coiled-coil domain-containing protein 88B (1476 aa).

Residues S253–Q481 adopt a coiled-coil conformation. Disordered regions lie at residues Q427 to D451, V509 to L706, R825 to E866, and L1323 to Q1476. Residue S436 is modified to Phosphoserine. The span at S572–Q586 shows a compositional bias: polar residues. Residue S596 is modified to Phosphoserine. Basic and acidic residues-rich tracts occupy residues E678–V690, R825–R834, and A842–E866. Residues L720–E1303 adopt a coiled-coil conformation. S1348 and S1379 each carry phosphoserine. Residues L1448 to P1469 are compositionally biased toward basic and acidic residues.

The protein belongs to the CCDC88 family. In terms of assembly, homodimer. Interacts with DOCK8. Interacts (via C-terminus) with intact microtubules. Interacts with dynein-dynactin motor complex. Interacts (via C-terminus) with HSPA5. In terms of tissue distribution, expressed in endothelium (at protein level). Expressed in NK cells (at protein level).

It is found in the membrane. The protein localises to the cytoplasm. The protein resides in the cytoskeleton. Its subcellular location is the microtubule organizing center. It localises to the endoplasmic reticulum. It is found in the golgi apparatus. Acts as a positive regulator of T-cell maturation and inflammatory function. Required for several functions of T-cells, in both the CD4(+) and the CD8(+) compartments and this includes expression of cell surface markers of activation, proliferation, and cytokine production in response to specific or non-specific stimulation. Enhances NK cell cytotoxicity by positively regulating polarization of microtubule-organizing center (MTOC) to cytotoxic synapse, lytic granule transport along microtubules, and dynein-mediated clustering to MTOC. Interacts with HSPA5 and stabilizes the interaction between HSPA5 and ERN1, leading to suppression of ERN1-induced JNK activation and endoplasmic reticulum stress-induced apoptosis. This chain is Coiled-coil domain-containing protein 88B (CCDC88B), found in Homo sapiens (Human).